A 475-amino-acid polypeptide reads, in one-letter code: Ankyrin repeat, SAM and basic leucine zipper domain-containing protein 1 (475 aa).

The tract at residues 1 to 24 (MAAAVQRGLPVAGGGESSESEDDG) is disordered. 3 positions are modified to phosphoserine: Ser17, Ser18, and Ser20. ANK repeat units follow at residues 45–74 (EKNE…SVES), 78–107 (YGWT…NASF), 110–144 (DKHT…DPNV), 148–177 (RLMT…EVNA), 181–210 (NGYT…NKML), and 214–243 (DGKT…PLEG). The 63-residue stretch at 272–334 (SYAAFGDLEI…KILAALKELA (63 aa)) folds into the SAM domain.

Interacts with DDX4, PIWIL1, RANBP9 and TDRD1.

The protein resides in the cytoplasm. Plays a central role during spermatogenesis by repressing transposable elements and preventing their mobilization, which is essential for the germline integrity. Acts via the piRNA metabolic process, which mediates the repression of transposable elements during meiosis by forming complexes composed of piRNAs and Piwi proteins and governs the methylation and subsequent repression of transposons. Its association with pi-bodies suggests a participation in the primary piRNAs metabolic process. Required prior to the pachytene stage to facilitate the production of multiple types of piRNAs, including those associated with repeats involved in the regulation of retrotransposons. May act by mediating protein-protein interactions during germ cell maturation. This Loxodonta africana (African elephant) protein is Ankyrin repeat, SAM and basic leucine zipper domain-containing protein 1 (ASZ1).